The primary structure comprises 269 residues: Flagellar hook-basal body complex protein FlhP (269 aa).

A coiled-coil region spans residues 7–65 (TASTTLNQLQQQIDTISSNLSNSNTTGYKAKDTNFSELVRQQFDQVDEKNEEVAKARKT).

Belongs to the flagella basal body rod proteins family.

This Bacillus subtilis (strain 168) protein is Flagellar hook-basal body complex protein FlhP (flhP).